Consider the following 645-residue polypeptide: MSVINCEEVKRDEFHTEKYYESYNIFGAHIVTEDEMRGVRFTVWAPHAKAMSVVGDFNEWDYEQHKMLQVTEEGIWSLFIPHIEEREIYKYAIETMAGDVIFKADPYAVYAEVRPNTASVVFDIKGYEWNDKNWSRKKKKKSVYKEAMTVYELHFGSWKKKEDGTLYSYREMAEELIPYVVEHQFTHIEIMPLVEHPYDRSWGYQGTGYYAATSRFGTPYDLMHFVDECHKYGIGVILDWVPGHFCKDAHGLYLFDGTPTYEYKDKDVQENPVWGTVNFDLGKREVRNFLISNALFWMRYFHIDGFRVDAVANMLYWNKEGQEQSNEHAVSFLRELNEAVFAEDEDFLMTAEDSTAWPLVTAPTYEGGLGFNYKWNMGWMNDVLKYMECAPEYRKYIHDKMTFSLLYAYSENFILPLSHDEVVHGKKSLLNKMPGDYWDKFAQLRLLYGYFFTHPGKKLLFMGGEFGQFDEWKDLEDLDWNLHDFEMHRYMHDYFKELIALYKRSKPLWQLDHSREGFQWIDANNNEQSIFSFIRQGDKQEDALVVVCNFTKATYENYKVGVPDFEYYNEILNSDAEQYGGSGQVNKKRLKTIQEPYHNQTAHVEITIPPFGVSILRPVKTRKGSKKQDGSKTKVRSNVTSRGKR.

Aspartate 309 serves as the catalytic Nucleophile. Catalysis depends on glutamate 352, which acts as the Proton donor. Residues 619–645 are disordered; the sequence is VKTRKGSKKQDGSKTKVRSNVTSRGKR. Residues 636 to 645 show a composition bias toward polar residues; it reads RSNVTSRGKR.

Belongs to the glycosyl hydrolase 13 family. GlgB subfamily. In terms of assembly, monomer.

It catalyses the reaction Transfers a segment of a (1-&gt;4)-alpha-D-glucan chain to a primary hydroxy group in a similar glucan chain.. Its pathway is glycan biosynthesis; glycogen biosynthesis. Functionally, catalyzes the formation of the alpha-1,6-glucosidic linkages in glycogen by scission of a 1,4-alpha-linked oligosaccharide from growing alpha-1,4-glucan chains and the subsequent attachment of the oligosaccharide to the alpha-1,6 position. In Bacillus cereus (strain AH820), this protein is 1,4-alpha-glucan branching enzyme GlgB.